The following is a 231-amino-acid chain: Flagellar L-ring protein (231 aa).

Residues 1–18 form the signal peptide; the sequence is MSRLLIVVSLSSAFALAG. A lipid anchor (N-palmitoyl cysteine) is attached at cysteine 19. Cysteine 19 is lipidated: S-diacylglycerol cysteine.

Belongs to the FlgH family. As to quaternary structure, the basal body constitutes a major portion of the flagellar organelle and consists of four rings (L,P,S, and M) mounted on a central rod.

It is found in the cell outer membrane. It localises to the bacterial flagellum basal body. Its function is as follows. Assembles around the rod to form the L-ring and probably protects the motor/basal body from shearing forces during rotation. This is Flagellar L-ring protein from Stutzerimonas stutzeri (strain A1501) (Pseudomonas stutzeri).